Consider the following 177-residue polypeptide: Transcriptional repressor NrdR (177 aa).

Residues 3–34 (CLFCQHTDTRVIDSRVSEDGATIRRRRECEAC) fold into a zinc finger. One can recognise an ATP-cone domain in the interval 49–139 (PVIIKKDGGR…VYRSFQDVAD (91 aa)).

This sequence belongs to the NrdR family. The cofactor is Zn(2+).

In terms of biological role, negatively regulates transcription of bacterial ribonucleotide reductase nrd genes and operons by binding to NrdR-boxes. The chain is Transcriptional repressor NrdR from Xylella fastidiosa (strain M23).